Here is a 340-residue protein sequence, read N- to C-terminus: Beta-D-galactofuranosidase xynD (340 aa).

The first 24 residues, 1–24 (MKHHNYYPSTCLSILPFLLPLTMS), serve as a signal peptide directing secretion. Residue Asp-51 is the Proton acceptor of the active site. N-linked (GlcNAc...) asparagine glycans are attached at residues Asn-96 and Asn-165. Glu-222 serves as the catalytic Proton donor. Residues Asn-302 and Asn-328 are each glycosylated (N-linked (GlcNAc...) asparagine).

This sequence belongs to the glycosyl hydrolase 43 family.

The protein resides in the secreted. It participates in glycan degradation. Glycoside hydrolase family 43 beta-D-galactofuranosidase involved in the degradation of beta-galactofuranoside (Galf)-containing glycans such as galactomannan or O-glycans. Is not active on beta-1,5- or beta-1,6-linked beta-D-galactofuranose (Galf) residues. The protein is Beta-D-galactofuranosidase xynD of Aspergillus niger (strain ATCC MYA-4892 / CBS 513.88 / FGSC A1513).